The primary structure comprises 304 residues: Glutaminase (304 aa).

7 residues coordinate substrate: Ser61, Asn113, Glu158, Asn165, Tyr189, Tyr240, and Val258.

It belongs to the glutaminase family. As to quaternary structure, homotetramer.

It carries out the reaction L-glutamine + H2O = L-glutamate + NH4(+). This is Glutaminase from Fusobacterium nucleatum subsp. nucleatum (strain ATCC 25586 / DSM 15643 / BCRC 10681 / CIP 101130 / JCM 8532 / KCTC 2640 / LMG 13131 / VPI 4355).